A 204-amino-acid chain; its full sequence is CLAVATA3/ESR (CLE)-related protein 1 (204 aa).

A signal peptide spans 1-21 (MAKNAMLCLLILSVVLALAFA). The tract at residues 21 to 83 (ATNEKDDKEA…SNQLQNAYRM (63 aa)) is required for secretion from the host cytoplasm to the host apoplasm. Asn32 carries an N-linked (GlcNAc...) asparagine glycan. The interval 116–204 (RNTGMKPQSY…TPGVPDRQHR (89 aa)) is disordered. Basic and acidic residues-rich tracts occupy residues 139 to 151 (LHNR…EQKR), 160 to 172 (LHNR…EQKR), and 181 to 193 (LHNR…EQKR). 3 propeptides (removed in mature form) span residues 142-150 (REKILEEQK), 163-171 (REKTLEEQK), and 184-192 (REKTLEEQK).

Belongs to the CLV3/ESR signal peptide family. Post-translationally, preprocessing of the precursor by host proteases leads first to the production of 21-mer CLE-containing peptides (Arg-130 to Lys-150, Arg-151 to Lys-171 and Arg-172 to Lys-192) followed by an ultimate C-term trimming to give the mature 12-mer CLE1-1 peptide. In terms of tissue distribution, highly expressed exclusively within the dorsal esophageal gland cell during syncytium formation in host plants.

The protein resides in the secreted. It is found in the host cytoplasm. It localises to the host extracellular space. The protein localises to the extracellular space. Its subcellular location is the apoplast. Functionally, mimics host plant CLE extracellular signal peptides that regulate cell fate. May play a role in the differentiation or division of feeding cells (syncytia) induced in plant roots during infection. This is CLAVATA3/ESR (CLE)-related protein 1 from Globodera rostochiensis (Golden nematode worm).